A 616-amino-acid chain; its full sequence is D-glucuronyl C5-epimerase (616 aa).

Residues methionine 1 to arginine 12 lie on the Cytoplasmic side of the membrane. A helical; Signal-anchor for type II membrane protein membrane pass occupies residues isoleucine 13–leucine 29. At threonine 30–asparagine 616 the chain is on the extracellular side. Residues tyrosine 136, arginine 141–arginine 143, and glutamine 169 contribute to the substrate site. 4 N-linked (GlcNAc...) asparagine glycosylation sites follow: asparagine 188, asparagine 232, asparagine 267, and asparagine 471. Substrate contacts are provided by residues tyrosine 504, arginine 562, and arginine 574–valine 580.

Belongs to the D-glucuronyl C5-epimerase family. In terms of assembly, homodimer. Expression in comma stage embryos is strong in the hypodermis and intestine and weaker in the head region. In late embryos, larval, and adult stages, expressed primarily in hypodermis and intestine.

Its subcellular location is the cell membrane. It localises to the secreted. The protein localises to the extracellular space. It is found in the extracellular matrix. The protein resides in the basement membrane. The catalysed reaction is [heparosan-N-sulfate](n) = [heparan-N-sulfate](n). It functions in the pathway glycan metabolism; heparan sulfate biosynthesis. Its pathway is glycan metabolism; heparin biosynthesis. Functionally, converts D-glucuronic acid residues adjacent to N-sulfate sugar residues to L-iduronic acids. Plays a role in the early migration of AQR and PQR neurons, which descend from the Q neuroblasts. The protein is D-glucuronyl C5-epimerase (hse-5) of Caenorhabditis elegans.